We begin with the raw amino-acid sequence, 81 residues long: Delta-actitoxin-Aeq2d (81 aa).

An N-terminal signal peptide occupies residues 1–19 (MNRLMILVFAAVILALASA). The propeptide occupies 20-25 (DDVDIA). Cystine bridges form between Cys-31/Cys-78, Cys-33/Cys-68, and Cys-61/Cys-79.

The protein belongs to the sea anemone sodium channel inhibitory toxin family. Type I subfamily.

It is found in the secreted. It localises to the nematocyst. In terms of biological role, binds specifically to voltage-gated sodium channels (Nav), thereby delaying their inactivation during signal transduction. Causes death to crabs. This Actinia equina (Beadlet anemone) protein is Delta-actitoxin-Aeq2d.